Here is an 88-residue protein sequence, read N- to C-terminus: uncharacterized protein (88 aa).

A dksA C4-type zinc finger spans residues 39 to 63 (CEECGAPIPQARREAIPGVRLCIHC).

This is an uncharacterized protein from Escherichia coli (strain K12).